A 169-amino-acid polypeptide reads, in one-letter code: X polypeptide (169 aa).

Belongs to the IagB/IpgF/P19 family.

This chain is X polypeptide (X), found in Escherichia coli.